Here is a 435-residue protein sequence, read N- to C-terminus: Cell adhesion molecule 2 (435 aa).

A signal peptide spans 1–24 (MIWKRSAVLRFYSVCGLLLLGSQG). Residues 25–367 (QFPLTQNVTV…SLAGQNGPDH (343 aa)) lie on the Extracellular side of the membrane. In terms of domain architecture, Ig-like V-type spans 27–119 (PLTQNVTVVE…PVKTSKAYLT (93 aa)). N-linked (GlcNAc...) asparagine glycosylation is found at asparagine 31 and asparagine 51. Cystine bridges form between cysteine 44/cysteine 104, cysteine 146/cysteine 203, and cysteine 248/cysteine 296. Ig-like C2-type domains follow at residues 127-219 (PQIS…VAMQ) and 227-312 (PSVK…YVLI). Asparagine 291 carries an N-linked (GlcNAc...) asparagine glycan. Low complexity predominate over residues 341-351 (TTSPSTSASSS). The disordered stretch occupies residues 341-360 (TTSPSTSASSSSRRDPNSLA). The helical transmembrane segment at 368-388 (ALIGGIVAVVVFVTLCSIFLL) threads the bilayer. The Cytoplasmic segment spans residues 389–435 (GRYLARHKGTYLTNEAKGAEDAPDADTAIINAEGSQVNAEEKKEYFI). Serine 423 bears the Phosphoserine mark.

Belongs to the nectin family. Glycosylation at Asn-51 reduces adhesive binding.

It localises to the cell membrane. It is found in the synapse. Its subcellular location is the cell projection. The protein localises to the axon. Adhesion molecule that engages in homo- and heterophilic interactions with the other nectin-like family members, leading to cell aggregation. Important for synapse organization, providing regulated trans-synaptic adhesion. Preferentially binds to oligodendrocytes. This is Cell adhesion molecule 2 (Cadm2) from Rattus norvegicus (Rat).